Here is a 341-residue protein sequence, read N- to C-terminus: Type II restriction enzyme BgcI specificity subunit S.BcgI (341 aa).

This sequence belongs to the type-I restriction system S methylase family. Heterotrimer of two A and one B subunit. Both subunits are necessary for DNA-binding, which is sequence non-specific. It depends on Mg(2+) as a cofactor.

The enzyme catalyses Endonucleolytic cleavage of DNA to give specific double-stranded fragments with terminal 5'-phosphates.. Its activity is regulated as follows. DNA restriction requires S-adenosyl-L-methionine and Mg(2+), and is inhibited by S-adenosyl-homocysteine. SAM may be a cofactor for DNA restriction. Its function is as follows. The specificity subunit. A B, G, H and S subtype restriction enzyme that recognizes the double-stranded sequence 5'-CGAN(6)TGC-3' and cleaves bilaterally and symmetrically 10 base pairs upstream and 12 base pairs downstream of the sequence to release a 34-base pair fragment. Methylation of the recognition sequence occurs on the adenine in either one or both strands; seems to methylate restricted DNA. This subunit degrades DNA in a non-specific manner. In Heyndrickxia coagulans (Weizmannia coagulans), this protein is Type II restriction enzyme BgcI specificity subunit S.BcgI.